The following is a 227-amino-acid chain: MESFEELEKLLDYSFKNKALLTEALSHPSLRQHHEYKANKDYERLEFLGDAVLNLIITEILFNNFKEYNEGNLAKIRSYLVCKETICVVGAKLGLKNYIIMTHGEEIAGGRDNPNNIENVTEALIAAIYLDSDITTIHNIIGKLWAEFIKVKDLTDYDPKTALQEWAQSKDHHIPIYRLIKREGVAHLSTFTVSVKINGYEQTGKGHSIKEAEKNAARELLHKLKLL.

Positions 4–133 (FEELEKLLDY…LIAAIYLDSD (130 aa)) constitute an RNase III domain. E46 serves as a coordination point for Mg(2+). The active site involves D50. Mg(2+)-binding residues include N119 and E122. The active site involves E122. The region spanning 158–226 (DPKTALQEWA…ARELLHKLKL (69 aa)) is the DRBM domain.

The protein belongs to the ribonuclease III family. In terms of assembly, homodimer. It depends on Mg(2+) as a cofactor.

It localises to the cytoplasm. It catalyses the reaction Endonucleolytic cleavage to 5'-phosphomonoester.. In terms of biological role, digests double-stranded RNA. Involved in the processing of primary rRNA transcript to yield the immediate precursors to the large and small rRNAs (23S and 16S). Processes some mRNAs, and tRNAs when they are encoded in the rRNA operon. Processes pre-crRNA and tracrRNA of type II CRISPR loci if present in the organism. This chain is Ribonuclease 3, found in Rickettsia bellii (strain OSU 85-389).